The following is a 427-amino-acid chain: Diaminobutyrate--2-oxoglutarate transaminase (427 aa).

Position 269 is an N6-(pyridoxal phosphate)lysine (Lys269).

This sequence belongs to the class-III pyridoxal-phosphate-dependent aminotransferase family. Requires pyridoxal 5'-phosphate as cofactor.

It catalyses the reaction L-2,4-diaminobutanoate + 2-oxoglutarate = L-aspartate 4-semialdehyde + L-glutamate. The protein operates within amine and polyamine biosynthesis; ectoine biosynthesis; L-ectoine from L-aspartate 4-semialdehyde: step 1/3. Its function is as follows. Catalyzes reversively the conversion of L-aspartate beta-semialdehyde (ASA) to L-2,4-diaminobutyrate (DABA) by transamination with L-glutamate. The chain is Diaminobutyrate--2-oxoglutarate transaminase (ectB) from Halalkalibacterium halodurans (strain ATCC BAA-125 / DSM 18197 / FERM 7344 / JCM 9153 / C-125) (Bacillus halodurans).